The sequence spans 82 residues: Omega-ctenitoxin-Pn1a (82 aa).

Residues 1-21 (MWLKIQVFLLAITLITLGIQA) form the signal peptide. A propeptide spanning residues 22-37 (EPNSSPNNPLIEEEAR) is cleaved from the precursor. Disulfide bonds link Cys-39–Cys-54, Cys-46–Cys-59, Cys-53–Cys-70, and Cys-61–Cys-68. Residues 72 to 82 (KKFIEFFGGGK) constitute a propeptide that is removed on maturation.

The protein belongs to the neurotoxin 02 (plectoxin) family. Expressed by the venom gland.

Its subcellular location is the secreted. Antagonist of L-type calcium channels (Cav1/CACNA1). Induces immediate clockwise gyration and flaccid paralysis after 6 hours at dose levels of 5 ug per mouse. This chain is Omega-ctenitoxin-Pn1a, found in Phoneutria nigriventer (Brazilian armed spider).